Consider the following 426-residue polypeptide: Enolase (426 aa).

The segment at 32 to 53 (TGRAAVPSGASTGAYEAHEQRD) is disordered. Q163 provides a ligand contact to (2R)-2-phosphoglycerate. E205 (proton donor) is an active-site residue. Residues D242, E285, and D312 each coordinate Mg(2+). Residues K337, R366, S367, and K388 each contribute to the (2R)-2-phosphoglycerate site. K337 acts as the Proton acceptor in catalysis.

It belongs to the enolase family. The cofactor is Mg(2+).

The protein resides in the cytoplasm. The protein localises to the secreted. It localises to the cell surface. It catalyses the reaction (2R)-2-phosphoglycerate = phosphoenolpyruvate + H2O. It functions in the pathway carbohydrate degradation; glycolysis; pyruvate from D-glyceraldehyde 3-phosphate: step 4/5. Catalyzes the reversible conversion of 2-phosphoglycerate (2-PG) into phosphoenolpyruvate (PEP). It is essential for the degradation of carbohydrates via glycolysis. This is Enolase from Hyphomonas neptunium (strain ATCC 15444).